A 436-amino-acid chain; its full sequence is Cytokine receptor-like factor 3 (436 aa).

Residues 9–87 (LMQEAWESID…VSAIEQENIK (79 aa)) adopt a coiled-coil conformation. The Fibronectin type-III domain maps to 177 to 270 (PPVQIEELIE…LQTSRTTLVP (94 aa)).

Belongs to the cytokine receptor-like factor 3 family.

The protein resides in the cytoplasm. In terms of biological role, may play a role in the negative regulation of cell cycle progression. This is Cytokine receptor-like factor 3 (crlf3) from Xenopus laevis (African clawed frog).